A 351-amino-acid polypeptide reads, in one-letter code: E3 ubiquitin-protein ligase TRIM63 (351 aa).

The segment at 23 to 79 (CPICLEMFTKPVVILPCQHNLCRKCANDIFQAANPYWTNRGGSVSMSGGRFRCPSCR) adopts an RING-type zinc-finger fold. The interval 74–218 (RCPSCRHEVI…LSHKFDALYA (145 aa)) is interaction with TTN. The B box-type zinc finger occupies 117–159 (GSHPMCKEHEDEKINIYCLTCEVPTCSLCKVFGAHQACEVAPL). Zn(2+)-binding residues include Cys122, His125, Cys145, and His151. Positions 189–269 (SQLEDSCRVT…VETAIQSLDE (81 aa)) form a coiled coil. A COS domain is found at 267 to 325 (LDEPGGATFLLSAKPLIKSIVEASKGCQLGKTEQGFENMDYFTLNLEHIAEALRAIDFG). Residues 326–345 (TDEEEEFTEEEEEEDQEEGV) show a composition bias toward acidic residues. A disordered region spans residues 326–351 (TDEEEEFTEEEEEEDQEEGVSTEGHQ).

Homodimer. Homooligomer and heterooligomer. Interacts with SUMO2, titin/TTN and GMEB1. Interacts with TRIM54 and probably with TRIM55 and TNNI3. Forms a ternary complex with RACK1 and PRKCE. Interacts with CKM. As to expression, muscle specific. Selectively expressed in heart and skeletal muscle.

Its subcellular location is the cytoplasm. It is found in the nucleus. It localises to the myofibril. The protein localises to the sarcomere. The protein resides in the m line. Its subcellular location is the z line. The catalysed reaction is S-ubiquitinyl-[E2 ubiquitin-conjugating enzyme]-L-cysteine + [acceptor protein]-L-lysine = [E2 ubiquitin-conjugating enzyme]-L-cysteine + N(6)-ubiquitinyl-[acceptor protein]-L-lysine.. The protein operates within protein modification; protein ubiquitination. Its function is as follows. E3 ubiquitin ligase. Mediates the ubiquitination and subsequent proteasomal degradation of CKM, GMEB1 and HIBADH. Regulates the proteasomal degradation of muscle proteins under amino acid starvation, where muscle protein is catabolized to provide other organs with amino acids. Inhibits de novo skeletal muscle protein synthesis under amino acid starvation. Regulates proteasomal degradation of cardiac troponin I/TNNI3 and probably of other sarcomeric-associated proteins. May play a role in striated muscle atrophy and hypertrophy by regulating an anti-hypertrophic PKC-mediated signaling pathway. May regulate the organization of myofibrils through TTN in muscle cells. In Rattus norvegicus (Rat), this protein is E3 ubiquitin-protein ligase TRIM63 (Trim63).